Here is a 750-residue protein sequence, read N- to C-terminus: Photosystem I P700 chlorophyll a apoprotein A1 (750 aa).

8 helical membrane passes run 70 to 93 (IFSA…FHGA), 156 to 179 (LYCT…FHYH), 195 to 219 (LNHH…HVSL), 291 to 309 (IAHH…GHMY), 346 to 369 (WHAQ…HHMY), 385 to 411 (LSLF…IFMV), 433 to 455 (AIIS…LYIH), and 531 to 549 (FLVH…LILL). 2 residues coordinate [4Fe-4S] cluster: C573 and C582. 2 consecutive transmembrane segments (helical) span residues 589–610 (HVFL…HFSW) and 664–686 (LSAY…MFLF). Residue H675 coordinates chlorophyll a'. Positions 683 and 691 each coordinate chlorophyll a. W692 is a phylloquinone binding site. A helical membrane pass occupies residues 724–744 (AVGVTHYLLGGIATTWAFFLA).

This sequence belongs to the PsaA/PsaB family. As to quaternary structure, the PsaA/B heterodimer binds the P700 chlorophyll special pair and subsequent electron acceptors. PSI consists of a core antenna complex that captures photons, and an electron transfer chain that converts photonic excitation into a charge separation. The eukaryotic PSI reaction center is composed of at least 11 subunits. P700 is a chlorophyll a/chlorophyll a' dimer, A0 is one or more chlorophyll a, A1 is one or both phylloquinones and FX is a shared 4Fe-4S iron-sulfur center. is required as a cofactor.

It localises to the plastid. The protein localises to the chloroplast thylakoid membrane. It catalyses the reaction reduced [plastocyanin] + hnu + oxidized [2Fe-2S]-[ferredoxin] = oxidized [plastocyanin] + reduced [2Fe-2S]-[ferredoxin]. In terms of biological role, psaA and PsaB bind P700, the primary electron donor of photosystem I (PSI), as well as the electron acceptors A0, A1 and FX. PSI is a plastocyanin-ferredoxin oxidoreductase, converting photonic excitation into a charge separation, which transfers an electron from the donor P700 chlorophyll pair to the spectroscopically characterized acceptors A0, A1, FX, FA and FB in turn. Oxidized P700 is reduced on the lumenal side of the thylakoid membrane by plastocyanin. The chain is Photosystem I P700 chlorophyll a apoprotein A1 from Gossypium hirsutum (Upland cotton).